We begin with the raw amino-acid sequence, 360 residues long: Phospho-N-acetylmuramoyl-pentapeptide-transferase (360 aa).

Helical transmembrane passes span 27 to 47 (IVSL…LIGW), 72 to 92 (PTMG…MWAY), 94 to 114 (SNPY…VGFV), 132 to 152 (WKYF…YCIG), 168 to 188 (IMPQ…VGTS), 199 to 219 (GLAI…AWAT), 236 to 256 (AGEL…FLWF), 263 to 283 (VFMG…IAVL), 288 to 308 (FLLV…ILQV), and 338 to 358 (VIVR…ATLK).

Belongs to the glycosyltransferase 4 family. MraY subfamily. Requires Mg(2+) as cofactor.

The protein localises to the cell inner membrane. It carries out the reaction UDP-N-acetyl-alpha-D-muramoyl-L-alanyl-gamma-D-glutamyl-meso-2,6-diaminopimeloyl-D-alanyl-D-alanine + di-trans,octa-cis-undecaprenyl phosphate = di-trans,octa-cis-undecaprenyl diphospho-N-acetyl-alpha-D-muramoyl-L-alanyl-D-glutamyl-meso-2,6-diaminopimeloyl-D-alanyl-D-alanine + UMP. It functions in the pathway cell wall biogenesis; peptidoglycan biosynthesis. Catalyzes the initial step of the lipid cycle reactions in the biosynthesis of the cell wall peptidoglycan: transfers peptidoglycan precursor phospho-MurNAc-pentapeptide from UDP-MurNAc-pentapeptide onto the lipid carrier undecaprenyl phosphate, yielding undecaprenyl-pyrophosphoryl-MurNAc-pentapeptide, known as lipid I. The protein is Phospho-N-acetylmuramoyl-pentapeptide-transferase of Edwardsiella ictaluri (strain 93-146).